The sequence spans 199 residues: Nucleoid occlusion factor SlmA (199 aa).

One can recognise an HTH tetR-type domain in the interval 11–71; that stretch reads ERRQQVLTVL…ALIDNLEAHL (61 aa). Positions 34-53 form a DNA-binding region, H-T-H motif; the sequence is TTARIAAEVGVSEAALYRYY.

It belongs to the nucleoid occlusion factor SlmA family. In terms of assembly, homodimer. Interacts with FtsZ.

It is found in the cytoplasm. The protein resides in the nucleoid. In terms of biological role, required for nucleoid occlusion (NO) phenomenon, which prevents Z-ring formation and cell division over the nucleoid. Acts as a DNA-associated cell division inhibitor that binds simultaneously chromosomal DNA and FtsZ, and disrupts the assembly of FtsZ polymers. SlmA-DNA-binding sequences (SBS) are dispersed on non-Ter regions of the chromosome, preventing FtsZ polymerization at these regions. The protein is Nucleoid occlusion factor SlmA of Pasteurella multocida (strain Pm70).